The sequence spans 199 residues: Holliday junction branch migration complex subunit RuvA (199 aa).

A domain I region spans residues 1-64 (MIGRITGILL…EDGHFLYGFA (64 aa)). Residues 65–143 (SADERAAFRQ…RALPGFGAST (79 aa)) form a domain II region. The interval 144–152 (VPGAAAQPA) is flexible linker. Positions 152–199 (ADSRSDILNALLALGYSDKEAQSALKAIPPETGVSDGIRQALKLLSKA) are domain III.

The protein belongs to the RuvA family. As to quaternary structure, homotetramer. Forms an RuvA(8)-RuvB(12)-Holliday junction (HJ) complex. HJ DNA is sandwiched between 2 RuvA tetramers; dsDNA enters through RuvA and exits via RuvB. An RuvB hexamer assembles on each DNA strand where it exits the tetramer. Each RuvB hexamer is contacted by two RuvA subunits (via domain III) on 2 adjacent RuvB subunits; this complex drives branch migration. In the full resolvosome a probable DNA-RuvA(4)-RuvB(12)-RuvC(2) complex forms which resolves the HJ.

It is found in the cytoplasm. Its function is as follows. The RuvA-RuvB-RuvC complex processes Holliday junction (HJ) DNA during genetic recombination and DNA repair, while the RuvA-RuvB complex plays an important role in the rescue of blocked DNA replication forks via replication fork reversal (RFR). RuvA specifically binds to HJ cruciform DNA, conferring on it an open structure. The RuvB hexamer acts as an ATP-dependent pump, pulling dsDNA into and through the RuvAB complex. HJ branch migration allows RuvC to scan DNA until it finds its consensus sequence, where it cleaves and resolves the cruciform DNA. This chain is Holliday junction branch migration complex subunit RuvA, found in Aromatoleum aromaticum (strain DSM 19018 / LMG 30748 / EbN1) (Azoarcus sp. (strain EbN1)).